The primary structure comprises 101 residues: Therostasin (101 aa).

The first 19 residues, 1 to 19, serve as a signal peptide directing secretion; the sequence is MRGLAVLLLVACFCSVAFG. Antistasin-like domains are found at residues 21–46 and 49–75; these read CENTECPRACPGEYEFDEDGCNTCLC and CNDAQCRIYCPLGFTTDANGCESFCTC.

In terms of tissue distribution, salivary glands.

It is found in the secreted. Functionally, potent inhibitor of factor Xa. It also inhibits trypsin in a weaker manner. This Theromyzon tessulatum (Duck leech) protein is Therostasin.